We begin with the raw amino-acid sequence, 1159 residues long: Caspase recruitment domain-containing protein 11 (1159 aa).

The 93-residue stretch at 18-110 (EEEALWDNVE…ELYKLVTGKE (93 aa)) folds into the CARD domain. Residues 111 to 128 (PTRRFSTIVVEEGHEGLT) are linker. Residues 176–449 (FQERYYKMKE…KDNGSLDQSL (274 aa)) are a coiled coil. A disordered region spans residues 441–496 (DNGSLDQSLPRHLPATIISQNLGDTSPRTNGQEADDSSTSEESPEDSKYFLPYHPP). Ser-448 and Ser-466 each carry phosphoserine. An inhibitory domain (ID) region spans residues 450–671 (PRHLPATIIS…GHVRGTGPLV (222 aa)). Residues 457–472 (IISQNLGDTSPRTNGQ) are compositionally biased toward polar residues. The span at 473–484 (EADDSSTSEESP) shows a compositional bias: acidic residues. Phosphoserine is present on residues Ser-512 and Ser-540. The segment at 532 to 578 (HEEDFTDGSPSSSRSLPVTSSFSKMQPHRSRSSIMSITAEPPGNDSI) is disordered. Residues 540–554 (SPSSSRSLPVTSSFS) are compositionally biased toward low complexity. A Phosphoserine; by PKC/PRKCB and PKC/PRKCQ modification is found at Ser-564. Ser-598 bears the Phosphoserine mark. Residues 610–631 (NHERYSFGPPSIHSSSSSHQSE) form a disordered region. A compositionally biased stretch (low complexity) spans 620–630 (SIHSSSSSHQS). A phosphoserine; by PKC/PRKCB and PKC/PRKCQ mark is found at Ser-649 and Ser-657. The PDZ domain maps to 672–760 (QHTTLNGDGL…LITLHYKVNH (89 aa)). Phosphoserine occurs at positions 891 and 930. One can recognise a Guanylate kinase-like domain in the interval 978–1145 (RRRPVLFTPT…LLRVLKDKIV (168 aa)).

Homodimer; disulfide-linked. Homomultimer; polymerizes following activation, forming a nucleating helical template that seeds BCL10-filament formation via a CARD-CARD interaction. Interacts (via CARD domain) with BCL10 (via CARD domain); interaction takes place following CARD11 activation and polymerization, leading to the formation of a filamentous CBM complex assembly. Component of a CBM complex (CARD11-BCL10-MALT1) complex involved in NF-kappa-B activation. Found in a membrane raft complex, at least composed of BCL10, CARD11, DPP4 and IKBKB. Interacts (via PDZ domain) with DPP4 (via cytoplasmic tail). Post-translationally, phosphorylation at Ser-564, Ser-649 and Ser-657 by PRKCB and PRKCQ leads to a shift from an inactive to an active form that activates the NF-kappa-B signaling.

The protein resides in the cytoplasm. The protein localises to the membrane raft. Its activity is regulated as follows. Maintained in an autoinhibited state via homodimerization in which the CARD domain forms an extensive interaction with the adjacent linker and coiled-coil regions. Activation downstream of T-cell receptor (TCR) by phosphorylation by PRKCB and PRKCQ triggers CARD11 homooligomerization and BCL10 recruitment, followed by activation of NF-kappa-B. Functionally, adapter protein that plays a key role in adaptive immune response by transducing the activation of NF-kappa-B downstream of T-cell receptor (TCR) and B-cell receptor (BCR) engagement. Transduces signals downstream TCR or BCR activation via the formation of a multiprotein complex together with BCL10 and MALT1 that induces NF-kappa-B and MAP kinase p38 (MAPK11, MAPK12, MAPK13 and/or MAPK14) pathways. Upon activation in response to TCR or BCR triggering, CARD11 homooligomerizes to form a nucleating helical template that recruits BCL10 via CARD-CARD interaction, thereby promoting polymerization of BCL10 and subsequent recruitment of MALT1: this leads to I-kappa-B kinase (IKK) phosphorylation and degradation, and release of NF-kappa-B proteins for nuclear translocation. Its binding to DPP4 induces T-cell proliferation and NF-kappa-B activation in a T-cell receptor/CD3-dependent manner. Promotes linear ubiquitination of BCL10 by promoting the targeting of BCL10 to RNF31/HOIP. Stimulates the phosphorylation of BCL10. Also activates the TORC1 signaling pathway. The sequence is that of Caspase recruitment domain-containing protein 11 from Mus musculus (Mouse).